The chain runs to 189 residues: Phosphoheptose isomerase (189 aa).

An SIS domain is found at 34-189 (AVETLKNGNK…CQIIDNELSH (156 aa)). 49-51 (NGG) is a binding site for substrate. His-58 and Glu-62 together coordinate Zn(2+). Substrate is bound by residues Glu-62, 91–92 (ND), 117–119 (STS), Ser-122, and Gln-169. Zn(2+) contacts are provided by Gln-169 and His-177.

The protein belongs to the SIS family. GmhA subfamily. Homotetramer. Zn(2+) serves as cofactor.

The protein resides in the cytoplasm. It catalyses the reaction 2 D-sedoheptulose 7-phosphate = D-glycero-alpha-D-manno-heptose 7-phosphate + D-glycero-beta-D-manno-heptose 7-phosphate. It participates in carbohydrate biosynthesis; D-glycero-D-manno-heptose 7-phosphate biosynthesis; D-glycero-alpha-D-manno-heptose 7-phosphate and D-glycero-beta-D-manno-heptose 7-phosphate from sedoheptulose 7-phosphate: step 1/1. In terms of biological role, catalyzes the isomerization of sedoheptulose 7-phosphate in D-glycero-D-manno-heptose 7-phosphate. This is Phosphoheptose isomerase from Aliarcobacter butzleri (strain RM4018) (Arcobacter butzleri).